A 462-amino-acid chain; its full sequence is Transactivator/viroplasmin protein (462 aa).

The interval 433–462 (NVSNDEKRSTKSVSSDEINLSAENDGYQHS) is disordered. A compositionally biased stretch (polar residues) spans 443–462 (KSVSSDEINLSAENDGYQHS).

It belongs to the caulimoviridae viroplasmin family.

The protein localises to the host cytoplasm. Its function is as follows. Enhances the translation of downstream ORFs on polycistronic mRNAs derived from soybean chlorotic mottle virus. This chain is Transactivator/viroplasmin protein, found in Soybean chlorotic mottle virus.